Consider the following 191-residue polypeptide: Neurotrophic factor BDNF precursor form (191 aa).

Positions 1–23 (GQGSLAYPGLRTQGNLETLGGPN) are disordered. The propeptide occupies 1–100 (GQGSLAYPGL…AANMSMRVRR (100 aa)). A glycan (N-linked (GlcNAc...) asparagine) is linked at asparagine 93. Residues cysteine 113 and cysteine 180 are joined by a disulfide bond.

The protein belongs to the NGF-beta family.

It localises to the secreted. Its function is as follows. Promotes the survival of neuronal populations that are all located either in the central nervous system or directly connected to it. The polypeptide is Neurotrophic factor BDNF precursor form (BDNF) (Anilius scytale (Coral cylinder snake)).